The following is a 341-amino-acid chain: Glycerol-1-phosphate dehydrogenase [NAD(P)+] (341 aa).

NAD(+) is bound by residues 81 to 85 (GKAID) and 103 to 106 (TTAS). Residue aspartate 108 participates in substrate binding. Serine 112 serves as a coordination point for NAD(+). Aspartate 151 is a binding site for substrate. Aspartate 151 and histidine 232 together coordinate Zn(2+). Histidine 236 is a binding site for substrate. Zn(2+) is bound at residue histidine 253.

It belongs to the glycerol-1-phosphate dehydrogenase family. Zn(2+) is required as a cofactor.

The protein localises to the cytoplasm. The catalysed reaction is sn-glycerol 1-phosphate + NAD(+) = dihydroxyacetone phosphate + NADH + H(+). The enzyme catalyses sn-glycerol 1-phosphate + NADP(+) = dihydroxyacetone phosphate + NADPH + H(+). The protein operates within membrane lipid metabolism; glycerophospholipid metabolism. Catalyzes the NAD(P)H-dependent reduction of dihydroxyacetonephosphate (DHAP or glycerone phosphate) to glycerol 1-phosphate (G1P). The G1P thus generated is used as the glycerophosphate backbone of phospholipids in the cellular membranes of Archaea. The chain is Glycerol-1-phosphate dehydrogenase [NAD(P)+] from Methanococcus aeolicus (strain ATCC BAA-1280 / DSM 17508 / OCM 812 / Nankai-3).